The chain runs to 96 residues: Small ribosomal subunit protein bS16 (96 aa).

This sequence belongs to the bacterial ribosomal protein bS16 family.

This is Small ribosomal subunit protein bS16 from Vesicomyosocius okutanii subsp. Calyptogena okutanii (strain HA).